The following is a 185-amino-acid chain: Elongation factor P (185 aa).

It belongs to the elongation factor P family.

It localises to the cytoplasm. It participates in protein biosynthesis; polypeptide chain elongation. In terms of biological role, involved in peptide bond synthesis. Stimulates efficient translation and peptide-bond synthesis on native or reconstituted 70S ribosomes in vitro. Probably functions indirectly by altering the affinity of the ribosome for aminoacyl-tRNA, thus increasing their reactivity as acceptors for peptidyl transferase. In Fervidobacterium nodosum (strain ATCC 35602 / DSM 5306 / Rt17-B1), this protein is Elongation factor P.